The following is a 1046-amino-acid chain: Toluene efflux pump membrane transporter TtgE (1046 aa).

12 consecutive transmembrane segments (helical) span residues 10-30 (IFAW…LTKM), 339-359 (SVVH…FLFL), 370-390 (LAVP…GISI), 392-412 (VLTM…AIVV), 440-460 (GALV…AFFG), 470-490 (FAVT…IFTP), 542-562 (LIFA…PKAF), 871-891 (APML…ALYE), 895-915 (VPMS…LATL), 927-947 (VGLM…IEFA), 973-993 (IIMT…ATGA), and 1008-1028 (GMIT…VVVV).

It belongs to the resistance-nodulation-cell division (RND) (TC 2.A.6) family.

It localises to the cell inner membrane. The inner membrane transporter component of an inducible organic solvent efflux pump. Involved in export of toluene and styrene but not of m-xylene, propylbenzene or ethylbenzene. Is not involved in antibiotic or AMP efflux. In Pseudomonas putida (strain DOT-T1E), this protein is Toluene efflux pump membrane transporter TtgE (ttgE).